We begin with the raw amino-acid sequence, 491 residues long: Ketol-acid reductoisomerase (NADP(+)) (491 aa).

A KARI N-terminal Rossmann domain is found at 14-208 (LKHLGKCRFM…GSHRAGVLES (195 aa)). NADP(+) is bound by residues 45 to 48 (CGSQ), arginine 68, and serine 78. Residue histidine 132 is part of the active site. An NADP(+)-binding site is contributed by glycine 158. 2 KARI C-terminal knotted domains span residues 209–344 (SFVA…QAPN) and 345–485 (YQQE…MQNM). Mg(2+) is bound by residues aspartate 217, glutamate 221, glutamate 389, and glutamate 393. Serine 414 is a substrate binding site.

It belongs to the ketol-acid reductoisomerase family. Mg(2+) is required as a cofactor.

It catalyses the reaction (2R)-2,3-dihydroxy-3-methylbutanoate + NADP(+) = (2S)-2-acetolactate + NADPH + H(+). The catalysed reaction is (2R,3R)-2,3-dihydroxy-3-methylpentanoate + NADP(+) = (S)-2-ethyl-2-hydroxy-3-oxobutanoate + NADPH + H(+). Its pathway is amino-acid biosynthesis; L-isoleucine biosynthesis; L-isoleucine from 2-oxobutanoate: step 2/4. It functions in the pathway amino-acid biosynthesis; L-valine biosynthesis; L-valine from pyruvate: step 2/4. Functionally, involved in the biosynthesis of branched-chain amino acids (BCAA). Catalyzes an alkyl-migration followed by a ketol-acid reduction of (S)-2-acetolactate (S2AL) to yield (R)-2,3-dihydroxy-isovalerate. In the isomerase reaction, S2AL is rearranged via a Mg-dependent methyl migration to produce 3-hydroxy-3-methyl-2-ketobutyrate (HMKB). In the reductase reaction, this 2-ketoacid undergoes a metal-dependent reduction by NADPH to yield (R)-2,3-dihydroxy-isovalerate. The sequence is that of Ketol-acid reductoisomerase (NADP(+)) from Blochmanniella pennsylvanica (strain BPEN).